We begin with the raw amino-acid sequence, 451 residues long: Phosphoglucosamine mutase (451 aa).

The active-site Phosphoserine intermediate is S107. S107, D246, D248, and D250 together coordinate Mg(2+). S107 carries the post-translational modification Phosphoserine.

Belongs to the phosphohexose mutase family. Mg(2+) serves as cofactor. Activated by phosphorylation.

It carries out the reaction alpha-D-glucosamine 1-phosphate = D-glucosamine 6-phosphate. Functionally, catalyzes the conversion of glucosamine-6-phosphate to glucosamine-1-phosphate. The protein is Phosphoglucosamine mutase of Burkholderia cenocepacia (strain HI2424).